The chain runs to 430 residues: Probable WRKY transcription factor 14 (430 aa).

Residues 211–277 (SGEVVPSDLW…YTSEHNHPWP (67 aa)) constitute a DNA-binding region (WRKY). Residues 283–366 (LAGSTRSSTS…APYRPELHDH (84 aa)) form a disordered region. Positions 286–306 (STRSSTSSSSNPNPSKPSTAN) are enriched in low complexity. Positions 307 to 319 (VNSSSIGSQNTIY) are enriched in polar residues. Over residues 340–354 (GDDMELENVDDDDDN) the composition is skewed to acidic residues.

The protein belongs to the WRKY group II-e family.

The protein localises to the nucleus. Transcription factor. Interacts specifically with the W box (5'-(T)TGAC[CT]-3'), a frequently occurring elicitor-responsive cis-acting element. This Arabidopsis thaliana (Mouse-ear cress) protein is Probable WRKY transcription factor 14 (WRKY14).